The chain runs to 190 residues: Transmembrane protein 11, mitochondrial (190 aa).

2 helical membrane-spanning segments follow: residues 84-100 and 107-124; these read VLAG…LPLD and LPAG…GISW.

This sequence belongs to the TMEM11 family. Associates with the mitochondrial contact site and cristae organizing system (MICOS) complex, composed of at least MICOS10/MIC10, CHCHD3/MIC19, CHCHD6/MIC25, APOOL/MIC27, IMMT/MIC60, APOO/MIC23/MIC26 and QIL1/MIC13. This complex was also known under the names MINOS or MitOS complex. The MICOS complex associates with mitochondrial outer membrane proteins SAMM50, MTX1, MTX2 and DNAJC11, mitochondrial inner membrane protein TMEM11 and with HSPA9. Interacts with IMMT/MIC60.

The protein resides in the mitochondrion inner membrane. Functionally, plays a role in mitochondrial morphogenesis. In Mus musculus (Mouse), this protein is Transmembrane protein 11, mitochondrial (Tmem11).